A 272-amino-acid polypeptide reads, in one-letter code: NADH-cytochrome b5 reductase 3 (272 aa).

Residues 11-123 (DIKYPLRLID…RGPNGLLVYQ (113 aa)) form the FAD-binding FR-type domain. Lys13 carries the post-translational modification N6-acetyllysine. Tyr14 carries the phosphotyrosine modification. Lys21 is modified (N6-acetyllysine). Arg63, Pro64, Tyr65, Val80, Lys82, and Tyr84 together coordinate FAD. Lys91 carries the post-translational modification N6-acetyllysine. Residues Lys97, Met98, Ser99, and Thr156 each coordinate FAD.

It belongs to the flavoprotein pyridine nucleotide cytochrome reductase family. As to quaternary structure, component of a complex composed of cytochrome b5, NADH-cytochrome b5 reductase (CYB5R3) and MTARC2. Interacts with MTLN; the interaction is required to maintain cellular lipid composition and leads to stimulation of mitochondrial respiratory complex I activity. FAD serves as cofactor.

The protein localises to the endoplasmic reticulum membrane. It is found in the mitochondrion outer membrane. The enzyme catalyses 2 Fe(III)-[cytochrome b5] + NADH = 2 Fe(II)-[cytochrome b5] + NAD(+) + H(+). Its function is as follows. Catalyzes the reduction of two molecules of cytochrome b5 using NADH as the electron donor. This Sus scrofa (Pig) protein is NADH-cytochrome b5 reductase 3 (CYB5R3).